The chain runs to 135 residues: MATPKQAAKKASKKRSGGRSAKAGLIFPVGRVGSLLRRGQYARRIGASGAVYMAAVLEYLTAELLELSVKAASQQAKKPKRLTPRTVTLAVRHDDDLGMLLKDVTLSRGGVMPSLNKALAKKHKSSKKARATPSA.

Belongs to the histone H2A family. The nucleosome is a histone octamer containing two molecules each of H2A, H2B, H3 and H4 assembled in one H3-H4 heterotetramer and two H2A-H2B heterodimers. The octamer wraps approximately 147 bp of DNA.

It localises to the nucleus. The protein localises to the chromosome. Its function is as follows. Core component of nucleosome. Nucleosomes wrap and compact DNA into chromatin, limiting DNA accessibility to the cellular machineries which require DNA as a template. Histones thereby play a central role in transcription regulation, DNA repair, DNA replication and chromosomal stability. DNA accessibility is regulated via a complex set of post-translational modifications of histones, also called histone code, and nucleosome remodeling. The sequence is that of Histone H2A from Trypanosoma cruzi.